Consider the following 442-residue polypeptide: Protein bangles and beads (442 aa).

Positions 47-442 (AVEPAPLKPE…SEESSESKEN (396 aa)) are disordered. Basic and acidic residues-rich tracts occupy residues 55–67 (PEAE…KTIE), 114–125 (PEKKTLPEEAKP), and 133–146 (EAEK…RTEA). Positions 159–172 (AIEQAPEAPAANAE) are enriched in low complexity. 2 stretches are compositionally biased toward basic and acidic residues: residues 177 to 194 (VVDE…KSAE) and 204 to 240 (AEKE…EPAK). Composition is skewed to low complexity over residues 241–255 (AAEA…AATK) and 272–288 (SSPA…AAQA). Basic and acidic residues predominate over residues 329-339 (EAVKEQEKEQP). The span at 357 to 376 (TAAPAGAPEPTAAVAPAAVP) shows a compositional bias: low complexity. The span at 408–442 (EPKKSSEEKSDKSESKVDESSESKESEESSESKEN) shows a compositional bias: basic and acidic residues. A phosphoserine mark is found at Ser-430, Ser-433, Ser-436, and Ser-437.

Expressed in the embryonic CNS, in sets of cells that are segmentally reiterated along the periphery of the nervous system.

Its function is as follows. May play an important role during development. This is Protein bangles and beads (bnb) from Drosophila melanogaster (Fruit fly).